A 138-amino-acid chain; its full sequence is Putative pre-16S rRNA nuclease (138 aa).

The protein belongs to the YqgF nuclease family.

It is found in the cytoplasm. Functionally, could be a nuclease involved in processing of the 5'-end of pre-16S rRNA. The polypeptide is Putative pre-16S rRNA nuclease (Caldicellulosiruptor saccharolyticus (strain ATCC 43494 / DSM 8903 / Tp8T 6331)).